A 276-amino-acid chain; its full sequence is MLMITSFANPRVAQAFVDYMATQGVILTIQQHNQSDVWLADESQAERVRAELARFLENPADPRYLAASWQAGHTGSGLHYRRYPFFAALRERAGPVTWVVMIACVVVFIAMQILGDQEVMLWLAWPFDPTLKFEFWRYFTHALMHFSLMHILFNLLWWWYLGGAVEKRLGSGKLIVITLISALLSGYVQQKFSGPWFGGLSGVVYALMGYVWLRGERDPQSGIYLQRGLIIFALIWIVAGWFDLFGMSMANGAHIAGLAVGLAMAFVDSLNARKRK.

6 consecutive transmembrane segments (helical) span residues 94–114, 142–162, 169–189, 192–212, 229–249, and 250–270; these read GPVT…MQIL, ALMH…WYLG, LGSG…GYVQ, FSGP…GYVW, LIIF…GMSM, and ANGA…VDSL. Residue S201 is the Nucleophile of the active site. Residue H254 is part of the active site.

This sequence belongs to the peptidase S54 family.

It is found in the cell inner membrane. The catalysed reaction is Cleaves type-1 transmembrane domains using a catalytic dyad composed of serine and histidine that are contributed by different transmembrane domains.. Its function is as follows. Rhomboid-type serine protease that catalyzes intramembrane proteolysis. The chain is Rhomboid protease GlpG from Escherichia coli (strain 55989 / EAEC).